The primary structure comprises 296 residues: Gamma-D-glutamyl-L-lysine dipeptidyl-peptidase (296 aa).

Substrate is bound by residues Y90, 199–201, and 218–219; these read DCS and DA. A NlpC/P60 domain is found at 170 to 295; the sequence is KGTAEDIIQT…ELCAVRRCFS (126 aa). C200 functions as the Nucleophile in the catalytic mechanism. The active-site Proton acceptor is the H253. H265 is a catalytic residue.

Belongs to the peptidase C40 family.

The enzyme catalyses The enzyme releases L-Ala-gamma-D-Glu dipeptides from cell wall peptides via cleavage of an L-Ala-gamma-D-Glu-|-L-Lys bond.. The protein operates within cell wall degradation; peptidoglycan degradation. Specifically hydrolyzes gamma-D-glutamyl-L-lysine bonds in murein peptides, releasing L-Ala-D-Glu. The polypeptide is Gamma-D-glutamyl-L-lysine dipeptidyl-peptidase (ykfC) (Bacillus subtilis (strain 168)).